A 187-amino-acid polypeptide reads, in one-letter code: Photosystem I assembly protein Ycf4 (187 aa).

Helical transmembrane passes span 25 to 45 (YLWA…GISS) and 69 to 89 (MSFY…TVIW).

It belongs to the Ycf4 family.

The protein resides in the cellular thylakoid membrane. Functionally, seems to be required for the assembly of the photosystem I complex. This is Photosystem I assembly protein Ycf4 from Trichodesmium erythraeum (strain IMS101).